The sequence spans 574 residues: Acetolactate synthase isozyme 3 large subunit (574 aa).

Position 51 (Glu51) interacts with thiamine diphosphate. FAD is bound by residues Arg153, 261–282 (HGTY…VGVR), and 304–323 (DIDP…IVGD). The thiamine pyrophosphate binding stretch occupies residues 397-477 (QHQMFAALYY…VLVVNLNNRY (81 aa)). Mg(2+) contacts are provided by Asp448 and Asn475.

Belongs to the TPP enzyme family. In terms of assembly, dimer of large and small chains. It depends on Mg(2+) as a cofactor. Thiamine diphosphate serves as cofactor.

The enzyme catalyses 2 pyruvate + H(+) = (2S)-2-acetolactate + CO2. Its pathway is amino-acid biosynthesis; L-isoleucine biosynthesis; L-isoleucine from 2-oxobutanoate: step 1/4. The protein operates within amino-acid biosynthesis; L-valine biosynthesis; L-valine from pyruvate: step 1/4. Its activity is regulated as follows. Sensitive to valine inhibition. This is Acetolactate synthase isozyme 3 large subunit (ilvI) from Escherichia coli (strain K12).